A 467-amino-acid chain; its full sequence is Protection of telomeres protein 1a (467 aa).

This sequence belongs to the telombin family. Component of the telomerase holoenzyme complex at least composed of TERT, CBF5 and POT1a. The RNA molecule associated to the telomerase complex, and providing a template for telomeric DNA synthesis, is most likely TR and not TER1 as described previously. Interacts with the N-terminal part of TERT. Interacts with CBF5. Interacts with CTC1 and STN1. Does not interact with TEN1. Expressed in roots, rosette leaves, cauline leaves, stems and flowers.

The protein localises to the nucleus. Its subcellular location is the chromosome. It localises to the telomere. It is found in the nucleolus. The protein resides in the cytoplasm. In terms of biological role, component of the telomerase ribonucleoprotein (RNP) complex that is essential for the positive regulation of telomere length. Binds RNA non-specifically. Binds specifically single-stranded telomeric DNA. Not required to recruit telomerase to telomeres, but stimulates TER1 RNP repeat addition processivity. The protein is Protection of telomeres protein 1a of Arabidopsis thaliana (Mouse-ear cress).